The following is a 151-amino-acid chain: MRFLAATFLLLALSTAAQAEPVQFKDCGSVDGVIKEVNVSPCPTQPCQLSKGQSYSVNVTFTSNIQSKSSKAVVHGILMGVPVPFPIPEPDGCKSGINCPIQKDKTYSYLNKLPVKSEYPSIKLVVEWQLQDDKNQSLFCWEIPVQIVSHL.

Positions M1 to A19 are cleaved as a signal peptide. Cystine bridges form between C27/C140, C42/C47, and C93/C99. N58 carries N-linked (GlcNAc...) asparagine glycosylation. Position 116 is an N6-acetyllysine (K116). N-linked (GlcNAc...) asparagine glycosylation occurs at N135.

Belongs to the NPC2 family. In terms of assembly, interacts with NPC1 (via the second lumenal domain) in a cholestrol-dependent manner. Interacts with NUS1/NgBR, the interaction stabilizes NCP2 and regulates cholesterol trafficking. Interacts with DHDDS. Interacts with NEDD4L (via C2 domain). Interacts with NPC1L1. In terms of tissue distribution, detected in gallbladder bile. Detected in fibroblasts, kidney, liver, spleen, small intestine, placenta and testis (at protein level). Epididymis.

It is found in the secreted. Its subcellular location is the endoplasmic reticulum. The protein resides in the lysosome. It catalyses the reaction cholesterol(in) = cholesterol(out). Functionally, intracellular cholesterol transporter which acts in concert with NPC1 and plays an important role in the egress of cholesterol from the lysosomal compartment. Unesterified cholesterol that has been released from LDLs in the lumen of the late endosomes/lysosomes is transferred by NPC2 to the cholesterol-binding pocket in the N-terminal domain of NPC1. May bind and mobilize cholesterol that is associated with membranes. NPC2 binds cholesterol with a 1:1 stoichiometry. Can bind a variety of sterols, including lathosterol, desmosterol and the plant sterols stigmasterol and beta-sitosterol. The secreted form of NCP2 regulates biliary cholesterol secretion via stimulation of ABCG5/ABCG8-mediated cholesterol transport. This chain is NPC intracellular cholesterol transporter 2, found in Homo sapiens (Human).